The primary structure comprises 1396 residues: DNA-directed RNA polymerase subunit beta' (1396 aa).

Zn(2+)-binding residues include Cys70, Cys72, Cys85, and Cys88. Asp460, Asp462, and Asp464 together coordinate Mg(2+). Positions 814, 889, 896, and 899 each coordinate Zn(2+).

This sequence belongs to the RNA polymerase beta' chain family. As to quaternary structure, the RNAP catalytic core consists of 2 alpha, 1 beta, 1 beta' and 1 omega subunit. When a sigma factor is associated with the core the holoenzyme is formed, which can initiate transcription. Requires Mg(2+) as cofactor. It depends on Zn(2+) as a cofactor.

The enzyme catalyses RNA(n) + a ribonucleoside 5'-triphosphate = RNA(n+1) + diphosphate. In terms of biological role, DNA-dependent RNA polymerase catalyzes the transcription of DNA into RNA using the four ribonucleoside triphosphates as substrates. The protein is DNA-directed RNA polymerase subunit beta' of Hahella chejuensis (strain KCTC 2396).